The following is a 67-amino-acid chain: Large ribosomal subunit protein bL35 (67 aa).

Residues 1-20 (MPKLKTKSGAKKRFVPKKSG) are disordered.

This sequence belongs to the bacterial ribosomal protein bL35 family.

This chain is Large ribosomal subunit protein bL35, found in Anaeromyxobacter dehalogenans (strain 2CP-C).